Here is a 417-residue protein sequence, read N- to C-terminus: Serine--tRNA ligase (417 aa).

Residue 232-234 coordinates L-serine; that stretch reads TAE. 263–265 is an ATP binding site; it reads RKE. Glu-286 lines the L-serine pocket. 350–353 serves as a coordination point for ATP; sequence EISS. Ser-385 is an L-serine binding site.

Belongs to the class-II aminoacyl-tRNA synthetase family. Type-1 seryl-tRNA synthetase subfamily. As to quaternary structure, homodimer. The tRNA molecule binds across the dimer.

It localises to the cytoplasm. It catalyses the reaction tRNA(Ser) + L-serine + ATP = L-seryl-tRNA(Ser) + AMP + diphosphate + H(+). It carries out the reaction tRNA(Sec) + L-serine + ATP = L-seryl-tRNA(Sec) + AMP + diphosphate + H(+). It functions in the pathway aminoacyl-tRNA biosynthesis; selenocysteinyl-tRNA(Sec) biosynthesis; L-seryl-tRNA(Sec) from L-serine and tRNA(Sec): step 1/1. In terms of biological role, catalyzes the attachment of serine to tRNA(Ser). Is also able to aminoacylate tRNA(Sec) with serine, to form the misacylated tRNA L-seryl-tRNA(Sec), which will be further converted into selenocysteinyl-tRNA(Sec). In Sulfurihydrogenibium sp. (strain YO3AOP1), this protein is Serine--tRNA ligase.